An 869-amino-acid polypeptide reads, in one-letter code: Phosphatidylethanolamine N-methyltransferase (869 aa).

Ser2 is subject to N-acetylserine. Topologically, residues 2 to 55 (SSCKTTLSEMVGSVTKDRGTINVKARTRSSNVTFKPPVTHDMVRSLFDPTLKKS) are lumenal. The chain crosses the membrane as a helical span at residues 56 to 76 (LLEKCIALAIISNFFICYWVF). Residues 77–86 (QRFGLQFTKY) lie on the Cytoplasmic side of the membrane. Residues 87–107 (FFLVQYLFWRIAYNLGIGLVL) form a helical membrane-spanning segment. The Lumenal segment spans residues 108–187 (HYQSHYETLT…EINVWLIFRQ (80 aa)). Residues 188–208 (FVDLILMQDFVTYIIYVYLSI) traverse the membrane as a helical segment. Residues 209–212 (PYSW) lie on the Cytoplasmic side of the membrane. Residues 213 to 233 (VQIFNWRSLLGVILILFNIWV) form a helical membrane-spanning segment. At 234 to 258 (KLDAHRVVKDYAWYWGDFFFLEESE) the chain is on the lumenal side. The helical transmembrane segment at 259-279 (LIFDGVFNISPHPMYSIGYLG) threads the bilayer. Over 280-291 (YYGLSLICNDYK) the chain is Cytoplasmic. A helical membrane pass occupies residues 292–310 (VLLVSVFGHYSQFLFLKYV). At 311-362 (ENPHIERTYGDGTDSDSQMNSRIDDLISKENYDYSRPLINMGLSFNNFNKLR) the chain is on the lumenal side. A helical transmembrane segment spans residues 363–383 (FTDYFTIGTVAALMLGAIMNA). At 384-389 (RFINLN) the chain is on the cytoplasmic side. The helical transmembrane segment at 390-410 (YLFITVFVTKLVSWLFISTIL) threads the bilayer. At 411 to 439 (YKQSQSKWFTRLFLENGYTQVYSYEQWQF) the chain is on the lumenal side. The chain crosses the membrane as a helical span at residues 440-460 (IYNYYLVLTYTLMIIYTGLQI). Topologically, residues 461-463 (WSN) are cytoplasmic. The chain crosses the membrane as a helical span at residues 464-484 (FSNINNSQLIFGLILVALQTW). Over 485–534 (CDKETRLAISDFGWFYGDFFLSNYISTRKLTSQGIYRYLNHPEAVLGVVG) the chain is Lumenal. A helical membrane pass occupies residues 535–555 (VWGTVLMTNFAVTNIILAVLW). Residues 556–869 (TLTNFILVKF…DIKQTLDSLA (314 aa)) lie on the Cytoplasmic side of the membrane.

Belongs to the class VI-like SAM-binding methyltransferase superfamily. CHO2 family.

It localises to the endoplasmic reticulum membrane. It carries out the reaction a 1,2-diacyl-sn-glycero-3-phosphoethanolamine + S-adenosyl-L-methionine = a 1,2-diacyl-sn-glycero-3-phospho-N-methylethanolamine + S-adenosyl-L-homocysteine + H(+). It functions in the pathway phospholipid metabolism; phosphatidylcholine biosynthesis. Its function is as follows. Catalyzes the first step of the methylation pathway of phosphatidylcholine biosynthesis, the SAM-dependent methylation of phosphatidylethanolamine (PE) to phosphatidylmonomethylethanolamine (PMME). This chain is Phosphatidylethanolamine N-methyltransferase (CHO2), found in Saccharomyces cerevisiae (strain YJM789) (Baker's yeast).